Reading from the N-terminus, the 251-residue chain is MNEAVKTLDGWFCLHDFRSIDWAAWRELNPGNQELMLNELSHFLSDMEITKNIGEGEHTIYSILGQKADLVFFTLRDSLEALNEVENRFNKLAIADYLLPTYSYISVVELSNYLASHMAGGEDPYQNKGVRARLYPALPPKKHICFYPMSKKRDGADNWYMLPMEERQQLIRDHGLIGRSYAGKVQQIIGGSIGFDDYEWGVTLFSDDALEFKRIVTEMRFDEASARYAEFGSFFIGNLLLSEQLSKLFTI.

Fe-coproporphyrin III is bound by residues Arg-133, 147 to 151, His-174, Gln-187, and Ser-225; that span reads YPMSK. Tyr-147 is an active-site residue.

Belongs to the ChdC family. Type 1 subfamily. It depends on Fe-coproporphyrin III as a cofactor.

The catalysed reaction is Fe-coproporphyrin III + 2 H2O2 + 2 H(+) = heme b + 2 CO2 + 4 H2O. It carries out the reaction Fe-coproporphyrin III + H2O2 + H(+) = harderoheme III + CO2 + 2 H2O. The enzyme catalyses harderoheme III + H2O2 + H(+) = heme b + CO2 + 2 H2O. It participates in porphyrin-containing compound metabolism; protoheme biosynthesis. Involved in coproporphyrin-dependent heme b biosynthesis. Catalyzes the decarboxylation of Fe-coproporphyrin III (coproheme) to heme b (protoheme IX), the last step of the pathway. The reaction occurs in a stepwise manner with a three-propionate intermediate. The protein is Coproheme decarboxylase of Listeria monocytogenes serotype 4a (strain HCC23).